A 260-amino-acid chain; its full sequence is Phosphate import ATP-binding protein PstB (260 aa).

The region spanning Leu14–Ile255 is the ABC transporter domain. Position 46–53 (Gly46–Ser53) interacts with ATP.

It belongs to the ABC transporter superfamily. Phosphate importer (TC 3.A.1.7) family. In terms of assembly, the complex is composed of two ATP-binding proteins (PstB), two transmembrane proteins (PstC and PstA) and a solute-binding protein (PstS).

Its subcellular location is the cell inner membrane. It catalyses the reaction phosphate(out) + ATP + H2O = ADP + 2 phosphate(in) + H(+). In terms of biological role, part of the ABC transporter complex PstSACB involved in phosphate import. Responsible for energy coupling to the transport system. This Thiobacillus denitrificans (strain ATCC 25259 / T1) protein is Phosphate import ATP-binding protein PstB.